A 570-amino-acid polypeptide reads, in one-letter code: MAKYVIGSAWPYVQTVPHLGNMIGSVLSADVYARYLRLRGHDVVFVSGSDMHGTPIEVEAIQLGVDPAEYAFKMHGVVAELFKRWNISFDLYTHTHSETHVAFVQEFFKRIYENGYIFTKDEEMPYCPRDKIFLPDRFIIGKCPYCGYERARGDQCENCGRLLDPKQLVEPRCAVCGSKPEWRLTRHWYLDLRRLEDKIRKYVEENPHLPQNAKEMSLAMLKEGLKPRAVTRDNKWGIPAPFPGAEGKTIYVWFEAVLGYISAVVEHFKRLGKESEWEKYWRDPDTKIIFFVGKDNIPFHVIILPALLLANGGGYTLPTTTASTEYLLYEGDKFSKSRRWGIWIDEALHLLPADYWRFILVYIRPENRDTSFTWAQALEIVNKVLNDDVGNYVNRVLSFIKSRMGGVVPPPGTPQEEDKSFLQAALQLFKKAERHYEAVELKDALHTVVEIAREGNRYLNARAPWDLLKTRPEEANAVMYHAYWSLKMLAAGLAPVIPESVEKMWEMMGRPASLTWDEALREPAPGVKLGEVKPLFRKVGEDEVKKMLQALEQMKREKASKKYPWEQALL.

Positions 11-21 (PYVQTVPHLGN) match the 'HIGH' region motif. The Zn(2+) site is built by Cys-143, Cys-146, Cys-156, and Cys-159. The 'KMSKS' region motif lies at 333 to 337 (KFSKS). ATP is bound at residue Lys-336.

Belongs to the class-I aminoacyl-tRNA synthetase family. MetG type 1 subfamily. Requires Zn(2+) as cofactor.

The protein localises to the cytoplasm. The catalysed reaction is tRNA(Met) + L-methionine + ATP = L-methionyl-tRNA(Met) + AMP + diphosphate. Is required not only for elongation of protein synthesis but also for the initiation of all mRNA translation through initiator tRNA(fMet) aminoacylation. This is Methionine--tRNA ligase from Pyrobaculum calidifontis (strain DSM 21063 / JCM 11548 / VA1).